The chain runs to 848 residues: Protein MEI2-like 2 (848 aa).

RRM domains are found at residues 197–270 (RTLF…FSIP) and 282–355 (GTLV…PSRP). Disordered stretches follow at residues 370–400 (IDQD…QYSS), 455–523 (NQPH…SQGQ), and 826–848 (ATGD…GEEL).

Functionally, probable RNA-binding protein that may play a role in growth regulation. This is Protein MEI2-like 2 (ML2) from Oryza sativa subsp. japonica (Rice).